Here is a 392-residue protein sequence, read N- to C-terminus: Chaperone protein DnaJ (392 aa).

Residues 2–67 (DYYSILGISK…QKRDSYDRFG (66 aa)) form the J domain. Residues 148-226 (GVEKELVVSG…CRGQGRVKDK (79 aa)) form a CR-type zinc finger. Zn(2+) is bound by residues Cys161, Cys164, Cys178, Cys181, Cys200, Cys203, Cys214, and Cys217. 4 CXXCXGXG motif repeats span residues 161–168 (CETCSGQG), 178–185 (CERCKGSG), 200–207 (CPECGGEG), and 214–221 (CSSCRGQG).

The protein belongs to the DnaJ family. As to quaternary structure, homodimer. The cofactor is Zn(2+).

It localises to the cytoplasm. Participates actively in the response to hyperosmotic and heat shock by preventing the aggregation of stress-denatured proteins and by disaggregating proteins, also in an autonomous, DnaK-independent fashion. Unfolded proteins bind initially to DnaJ; upon interaction with the DnaJ-bound protein, DnaK hydrolyzes its bound ATP, resulting in the formation of a stable complex. GrpE releases ADP from DnaK; ATP binding to DnaK triggers the release of the substrate protein, thus completing the reaction cycle. Several rounds of ATP-dependent interactions between DnaJ, DnaK and GrpE are required for fully efficient folding. Also involved, together with DnaK and GrpE, in the DNA replication of plasmids through activation of initiation proteins. This chain is Chaperone protein DnaJ, found in Chlamydia pneumoniae (Chlamydophila pneumoniae).